We begin with the raw amino-acid sequence, 350 residues long: Alcohol dehydrogenase (350 aa).

C46 provides a ligand contact to Zn(2+). H47, T48, and H51 together coordinate NAD(+). Residues H69, C100, C103, C106, C114, and C156 each contribute to the Zn(2+) site. The NAD(+) site is built by G183, G184, L185, and D204. T205 bears the Phosphothreonine mark. The NAD(+) site is built by K209 and F224. Residue T250 is modified to Phosphothreonine. Positions 271, 273, 296, 298, and 343 each coordinate NAD(+).

Belongs to the zinc-containing alcohol dehydrogenase family. As to quaternary structure, homotetramer. Zn(2+) is required as a cofactor.

The protein resides in the cytoplasm. It catalyses the reaction a primary alcohol + NAD(+) = an aldehyde + NADH + H(+). It carries out the reaction a secondary alcohol + NAD(+) = a ketone + NADH + H(+). The enzyme catalyses ethanol + NAD(+) = acetaldehyde + NADH + H(+). In terms of biological role, reduces acetaldehyde to ethanol during the fermentation of glucose. The polypeptide is Alcohol dehydrogenase (adh1) (Schizosaccharomyces pombe (strain 972 / ATCC 24843) (Fission yeast)).